A 376-amino-acid polypeptide reads, in one-letter code: Cyclin-dependent kinase 9-A (376 aa).

The region spanning 19-319 is the Protein kinase domain; sequence YERLAKIGQG…SDDALNNDFF (301 aa). ATP is bound by residues 25-33 and Lys48; that span reads IGQGTFGEV. Catalysis depends on Asp153, which acts as the Proton acceptor. The disordered stretch occupies residues 345 to 376; it reads PPRRRGGHMPQQPANQARNPAATNQSEFERVF. Residues 354–369 are compositionally biased toward low complexity; the sequence is PQQPANQARNPAATNQ.

Belongs to the protein kinase superfamily. CMGC Ser/Thr protein kinase family. CDC2/CDKX subfamily. In terms of assembly, associates with cyclin-T to form P-TEFb.

The protein localises to the nucleus. The catalysed reaction is L-seryl-[protein] + ATP = O-phospho-L-seryl-[protein] + ADP + H(+). It carries out the reaction L-threonyl-[protein] + ATP = O-phospho-L-threonyl-[protein] + ADP + H(+). It catalyses the reaction [DNA-directed RNA polymerase] + ATP = phospho-[DNA-directed RNA polymerase] + ADP + H(+). Member of the cyclin-dependent kinase pair (CDK9/cyclin-T) complex, also called positive transcription elongation factor B (P-TEFb), which is proposed to facilitate the transition from abortive to production elongation by phosphorylating the CTD (C-terminal domain) of the large subunit of RNA polymerase II (RNAP II) and SUPT5H. This chain is Cyclin-dependent kinase 9-A (cdk9-a), found in Xenopus laevis (African clawed frog).